The following is a 206-amino-acid chain: MTSNEENPVGVQTLKPNNDAKRVFEMRKIPSSNVMRVEYTKQSKYRTCVCPSALHFAEECPSNDVLFSVGAHRNMLCVAKAFDQTKPRGMQRGNRRNNVAKVMTLNELMPKDDSNDRKKAKTSKDRKVEKSSRGRASSSRSRGRGGFSRNGRDRRETDSQDEYSEDNSYKSEEESTEDETAPLTKKDMLKMMSMFQSGAKSKRRPR.

Residues 87-206 (PRGMQRGNRR…SGAKSKRRPR (120 aa)) are disordered. Residues 109–132 (MPKDDSNDRKKAKTSKDRKVEKSS) show a composition bias toward basic and acidic residues.

This sequence belongs to the phytoreovirus RNA-binding protein family.

The protein localises to the host cytoplasm. Its function is as follows. Constituent of viral factories. Binds to ssRNA and dsRNA. The sequence is that of RNA-binding protein from Rice gall dwarf virus (RGDV).